We begin with the raw amino-acid sequence, 366 residues long: Alanine racemase (366 aa).

Residue Lys-40 is the Proton acceptor; specific for D-alanine of the active site. Lys-40 carries the post-translational modification N6-(pyridoxal phosphate)lysine. Residue Arg-136 participates in substrate binding. The active-site Proton acceptor; specific for L-alanine is the Tyr-263. Position 310 (Met-310) interacts with substrate.

Belongs to the alanine racemase family. The cofactor is pyridoxal 5'-phosphate.

The catalysed reaction is L-alanine = D-alanine. It participates in amino-acid biosynthesis; D-alanine biosynthesis; D-alanine from L-alanine: step 1/1. Its function is as follows. Catalyzes the interconversion of L-alanine and D-alanine. May also act on other amino acids. The polypeptide is Alanine racemase (alr) (Streptococcus pyogenes serotype M28 (strain MGAS6180)).